Consider the following 528-residue polypeptide: Berberine bridge enzyme-like 17 (528 aa).

The N-terminal stretch at Met-1 to Ala-19 is a signal peptide. Asn-20, Asn-35, Asn-52, and Asn-72 each carry an N-linked (GlcNAc...) asparagine glycan. The cysteines at positions 32 and 94 are disulfide-linked. Residues Leu-69–Val-246 enclose the FAD-binding PCMH-type domain. A cross-link (6-(S-cysteinyl)-8alpha-(pros-histidyl)-FAD (His-Cys)) is located at residues His-109–Cys-171. 3 N-linked (GlcNAc...) asparagine glycosylation sites follow: Asn-256, Asn-340, and Asn-439.

Belongs to the oxygen-dependent FAD-linked oxidoreductase family. FAD is required as a cofactor. Post-translationally, the FAD cofactor is bound via a bicovalent 6-S-cysteinyl, 8alpha-N1-histidyl FAD linkage.

The protein resides in the secreted. The protein localises to the cell wall. The chain is Berberine bridge enzyme-like 17 from Arabidopsis thaliana (Mouse-ear cress).